The following is a 288-amino-acid chain: MAAHRLRQSVGRLFAMGPELGSGRRAFSAFQAFTEVLRLPSKQLTKLVFPLEELHEHFVPGSRPDLHLNIFHPSLEDIARAESFFTASARNRIEYLTSAVRLDHAPDLHRPEVCFIGRSNVGKSSLIKALFSLAPEVEVRVSKKPGHTKKLNFYKVGKYFTLVDMPGYGYRAPEDFVDMVETYLKERKNLMRTFLLVDSVVGIQKADNIAIEMCEEFALPYVMVLTKIDKPSKGHLLKQVLQIQKFVDTKTQGCFPQLFPVSAMTYSGIHLLRCFIADITGNLKTTGF.

An EngB-type G domain is found at 109–282; that stretch reads HRPEVCFIGR…RCFIADITGN (174 aa). GTP is bound by residues 117–124, 146–150, 164–167, 226–229, and 261–263; these read GRSNVGKS, GHTKK, DMPG, TKID, and VSA. Mg(2+) contacts are provided by serine 124 and threonine 148.

The protein belongs to the TRAFAC class TrmE-Era-EngA-EngB-Septin-like GTPase superfamily. EngB GTPase family. Requires Mg(2+) as cofactor.

The polypeptide is GTP-binding protein 8 (GTPBP8) (Bos taurus (Bovine)).